The chain runs to 59 residues: uncharacterized protein (59 aa).

ATP is bound at residue 33–40 (GRRRVGKT).

This is an uncharacterized protein from Methanocaldococcus jannaschii (strain ATCC 43067 / DSM 2661 / JAL-1 / JCM 10045 / NBRC 100440) (Methanococcus jannaschii).